The primary structure comprises 287 residues: DegV domain-containing protein DR_0500 (287 aa).

The 274-residue stretch at 7 to 280 folds into the DegV domain; sequence FAVVTDGGLD…PRALGVAAAP (274 aa). The hexadecanoate site is built by Ser62 and Ser93.

Functionally, may bind long-chain fatty acids, such as palmitate, and may play a role in lipid transport or fatty acid metabolism. The polypeptide is DegV domain-containing protein DR_0500 (Deinococcus radiodurans (strain ATCC 13939 / DSM 20539 / JCM 16871 / CCUG 27074 / LMG 4051 / NBRC 15346 / NCIMB 9279 / VKM B-1422 / R1)).